A 108-amino-acid polypeptide reads, in one-letter code: UPF0060 membrane protein SA2130 (108 aa).

Transmembrane regions (helical) follow at residues 5-25 (IFIF…IWLW), 31-51 (SSLV…IATF), 60-80 (VYAA…MVVD), and 86-106 (KYDV…LLPS).

The protein belongs to the UPF0060 family.

It is found in the cell membrane. The protein is UPF0060 membrane protein SA2130 of Staphylococcus aureus (strain N315).